The chain runs to 225 residues: Thaumatin-like protein (225 aa).

The N-terminal stretch at 1-24 (MSTFKSLSLSALLFIAFLFTCARG) is a signal peptide. 8 disulfides stabilise this stretch: C33-C224, C74-C84, C89-C95, C140-C213, C146-C196, C154-C164, C168-C177, and C178-C183.

Belongs to the thaumatin family. N-glycosylated.

It is found in the secreted. In terms of biological role, has antifungal activity against B.cinerea, C.comatus, M.arachidicola, P.piricola, C.albicans and S.carlsbergensis. Inhibits HIV-1 reverse transcriptase. This is Thaumatin-like protein from Actinidia chinensis var. chinensis (Chinese soft-hair kiwi).